A 141-amino-acid chain; its full sequence is Hemoglobin subunit alpha (141 aa).

The Globin domain maps to Val-1–Arg-141. Ser-3 bears the Phosphoserine mark. An N6-succinyllysine modification is found at Lys-7. Thr-8 is subject to Phosphothreonine. Lys-11 carries the N6-succinyllysine modification. Residue Lys-16 is modified to N6-acetyllysine; alternate. Lys-16 is subject to N6-succinyllysine; alternate. At Ser-35 the chain carries Phosphoserine. Lys-40 carries the N6-succinyllysine modification. Ser-49 bears the Phosphoserine mark. His-58 is a binding site for O2. Heme b is bound at residue His-87. At Ser-102 the chain carries Phosphoserine. At Thr-108 the chain carries Phosphothreonine. Ser-124 and Ser-131 each carry phosphoserine. Phosphothreonine is present on residues Thr-134 and Thr-137. Ser-138 carries the post-translational modification Phosphoserine.

Belongs to the globin family. In terms of assembly, heterotetramer of two alpha chains and two beta chains. Red blood cells.

Its function is as follows. Involved in oxygen transport from the lung to the various peripheral tissues. The protein is Hemoglobin subunit alpha of Sciurus carolinensis (Eastern gray squirrel).